A 178-amino-acid chain; its full sequence is Bifunctional protein PyrR (178 aa).

Residues 41–42 (RR), 103–111 (DDVLYTGRT), and Arg136 each bind substrate. The PRPP-binding motif lies at 99-111 (VILVDDVLYTGRT).

The protein belongs to the purine/pyrimidine phosphoribosyltransferase family. PyrR subfamily. Homodimer and homohexamer; in equilibrium.

It carries out the reaction UMP + diphosphate = 5-phospho-alpha-D-ribose 1-diphosphate + uracil. Functionally, regulates transcriptional attenuation of the pyrimidine nucleotide (pyr) operon by binding in a uridine-dependent manner to specific sites on pyr mRNA. This disrupts an antiterminator hairpin in the RNA and favors formation of a downstream transcription terminator, leading to a reduced expression of downstream genes. In terms of biological role, also displays a weak uracil phosphoribosyltransferase activity which is not physiologically significant. The polypeptide is Bifunctional protein PyrR (Clostridium acetobutylicum (strain ATCC 824 / DSM 792 / JCM 1419 / IAM 19013 / LMG 5710 / NBRC 13948 / NRRL B-527 / VKM B-1787 / 2291 / W)).